The sequence spans 602 residues: MKTKAPMKNIRNFSIIAHIDHGKSTLADCLISECNAISNREMKSQVMDTMDIEKERGITIKAQSVRLNYTFKGEDYVLNLIDTPGHVDFSYEVSRSLCSCEGALLVVDATQGVEAQTIANTYIALDNHLEILPVINKIDLPNANVLEVKQDIEDTIGIDCSNANEVSAKAKLGIKDLLEKIITTIPAPSGDPNAPLKALIYDSWFDNYLGALALVRIMDGSINTEQEILVMGTGKKHGVLGLYYPNPLKKIPTKSLECGEIGIVSLGLKSVTDIAVGDTLTDAKNPTSKPIEGFMPAKPFVFAGLYPIETDRFEDLREALLKLQLNDCALNFEPESSVALGFGFRVGFLGLLHMEVIKERLEREFGLNLIATAPTVVYEVHLTDNSIKYVQNPSELPPENHIACIKEPFVRATIITPSEFLGNLMQLLNNKRGIQEKMEYLNQSRVMLTYSLPSNEIVMDFYDKLKSCTKGYASFDYEPIENREAHLVKLDVRVAGDVVDALSIIIDKNKAYEKGRALVETMKELIPRQLFEVAIQASVGNKIIARETIKSVGKNVTAKCYGGDITRKRKLLEKQKEGKKRMKAIGKVELPQEAFLAILKID.

Positions 8–189 (KNIRNFSIIA…KIITTIPAPS (182 aa)) constitute a tr-type G domain. GTP contacts are provided by residues 20 to 25 (DHGKST) and 136 to 139 (NKID).

It belongs to the TRAFAC class translation factor GTPase superfamily. Classic translation factor GTPase family. LepA subfamily.

It localises to the cell inner membrane. The enzyme catalyses GTP + H2O = GDP + phosphate + H(+). Functionally, required for accurate and efficient protein synthesis under certain stress conditions. May act as a fidelity factor of the translation reaction, by catalyzing a one-codon backward translocation of tRNAs on improperly translocated ribosomes. Back-translocation proceeds from a post-translocation (POST) complex to a pre-translocation (PRE) complex, thus giving elongation factor G a second chance to translocate the tRNAs correctly. Binds to ribosomes in a GTP-dependent manner. This is Elongation factor 4 from Helicobacter pylori (strain HPAG1).